Here is a 686-residue protein sequence, read N- to C-terminus: Probable ferric reductase transmembrane component (686 aa).

A run of 7 helical transmembrane segments spans residues 23-43 (LSGW…VPVV), 79-99 (TLWL…VGSA), 111-131 (VAAA…PLPY), 147-167 (VVVL…ATSG), 178-198 (WMGA…LPAV), 205-225 (TFYY…HVHS), and 256-276 (VTVV…ADLV). The Ferric oxidoreductase domain occupies 108 to 666 (LGRVAAAFMP…LAAGPQALVE (559 aa)). Residue 308 to 314 (HPFTVAS) participates in FAD binding. A helical membrane pass occupies residues 392–412 (LMVVGGSAISFGLPFLRILNF). 431–439 (ILSQFRSNF) is a binding site for NAD(+). 2 N-linked (GlcNAc...) asparagine glycosylation sites follow: Asn506 and Asn644.

FAD serves as cofactor.

It is found in the membrane. It catalyses the reaction 2 a Fe(II)-siderophore + NAD(+) + H(+) = 2 a Fe(III)-siderophore + NADH. Its function is as follows. Is required for the uptake of Fe(3+) ions. May participate in the transport of electrons from cytoplasm to an extracellular substrate (Fe(3+) ion) via FAD and heme intermediates. Involved in iron homeostasis. In Eremothecium gossypii (strain ATCC 10895 / CBS 109.51 / FGSC 9923 / NRRL Y-1056) (Yeast), this protein is Probable ferric reductase transmembrane component (FRE8).